The sequence spans 343 residues: Anthranilate phosphoribosyltransferase (343 aa).

Residues Gly84, 87-88, Thr92, 94-97, 112-120, and Ser124 contribute to the 5-phospho-alpha-D-ribose 1-diphosphate site; these read GD, NIST, and KHGNRGVSS. Residue Gly84 coordinates anthranilate. Position 96 (Ser96) interacts with Mg(2+). Anthranilate is bound at residue Asn115. Residue Arg170 coordinates anthranilate. Positions 229 and 230 each coordinate Mg(2+).

The protein belongs to the anthranilate phosphoribosyltransferase family. As to quaternary structure, homodimer. It depends on Mg(2+) as a cofactor.

The enzyme catalyses N-(5-phospho-beta-D-ribosyl)anthranilate + diphosphate = 5-phospho-alpha-D-ribose 1-diphosphate + anthranilate. The protein operates within amino-acid biosynthesis; L-tryptophan biosynthesis; L-tryptophan from chorismate: step 2/5. Its function is as follows. Catalyzes the transfer of the phosphoribosyl group of 5-phosphorylribose-1-pyrophosphate (PRPP) to anthranilate to yield N-(5'-phosphoribosyl)-anthranilate (PRA). This is Anthranilate phosphoribosyltransferase from Burkholderia orbicola (strain MC0-3).